The chain runs to 79 residues: MNNNIIHYTLDTLGLRCPEPVMLVRKQIRHMQNGEMLLVIADDPATTRDIPGFCQFMEHTLVRAEMERPPFRYWVKKGK.

Catalysis depends on Cys-17, which acts as the Cysteine persulfide intermediate.

It belongs to the sulfur carrier protein TusA family.

It localises to the cytoplasm. Its function is as follows. Sulfur carrier protein which probably makes part of a sulfur-relay system. This chain is Sulfur carrier protein TusA, found in Actinobacillus succinogenes (strain ATCC 55618 / DSM 22257 / CCUG 43843 / 130Z).